We begin with the raw amino-acid sequence, 301 residues long: Syntaxin-17 (301 aa).

Residue S2 is modified to N-acetylserine. The Cytoplasmic segment spans residues 2 to 227; the sequence is SEDEEKVKLR…KNLQKAAKYK (226 aa). K41 carries the post-translational modification N6-acetyllysine. Residues 49–128 are a coiled coil; the sequence is DKLHEEHINA…QVKNEEALLQ (80 aa). Y156 is modified (phosphotyrosine; by ABL1). A t-SNARE coiled-coil homology domain is found at 161 to 223; sequence IPRDQNAAES…EEGTKNLQKA (63 aa). A helical membrane pass occupies residues 228–248; sequence LAALPVAGAVIGGVVGGPIGL. The tract at residues 228–274 is necessary and sufficient for localization to autophagosome; the sequence is LAALPVAGAVIGGVVGGPIGLLAGFKVAGIAAALGGGVLGFTGGKLI. The Lumenal portion of the chain corresponds to 249-253; the sequence is LAGFK. Residues 254–274 traverse the membrane as a helical segment; it reads VAGIAAALGGGVLGFTGGKLI. A required for interaction with COPB1, TMED9 and TMED10 region spans residues 273–301; it reads LIQRRKQKMMEKLTSSCPDLPSQSDKKCS. The Cytoplasmic segment spans residues 275 to 301; the sequence is QRRKQKMMEKLTSSCPDLPSQSDKKCS. Residue S288 is modified to Phosphoserine. The Endoplasmic reticulum retention signal motif lies at 298–301; that stretch reads KKCS.

Belongs to the syntaxin family. Forms a SNARE complex composed of VAMP8, SNAP29 and STX17 involved in fusion of autophagosome with lysosome. May interact with VAMP7. May interact with VTI1B. Probably interacts with BET1, SCFD1 and SEC22B. Interacts with PTPN2 and ABL1; involved in STX17 phosphorylation. Interacts with COPB1. Interacts with TMED9 and TMED10; the interaction is direct. Interacts with RUBCNL/PACER; promoting targeting of RUBCNL/PACER to autophagosome. Interacts with VAMP8, SNAP29, VPS39 and VPS41; these interactions are increased in the absence of TMEM39A. Interacts with IRGM; promoting STX17 recruitment to autophagosomes. Interacts with ATG8 proteins GABARAP and MAP1LC3B. Interacts with RNF115; this interaction enhances STX17 stability which in turn promotes autophagosome maturation. Interacts with RAB39A (GTP-bound); the interaction promotes autophagosome-lysosome membrane fusion driven by STX17-SNAP29-VAMP8. Interacts with RAB39B; the interaction may promote a different fonction in autophagy as compared with RAB39A. Phosphorylated at Tyr-156 probably by ABL1. Dephosphorylation by PTPN2; regulates exit from the endoplasmic reticulum. Detected in all tissues examined with higher expression in steroidogenic tissues including testis and adrenal gland (at protein level). Highly expressed in liver and testis. Also found in brain, heart, kidney, lung, placenta, skeletal muscle and spleen.

The protein resides in the endoplasmic reticulum membrane. It is found in the smooth endoplasmic reticulum membrane. Its subcellular location is the endoplasmic reticulum-Golgi intermediate compartment membrane. The protein localises to the cytoplasmic vesicle. It localises to the autophagosome membrane. The protein resides in the COPII-coated vesicle membrane. It is found in the cytoplasm. Its subcellular location is the cytosol. The protein localises to the mitochondrion membrane. It localises to the autolysosome membrane. SNAREs, soluble N-ethylmaleimide-sensitive factor-attachment protein receptors, are essential proteins for fusion of cellular membranes. SNAREs localized on opposing membranes assemble to form a trans-SNARE complex, an extended, parallel four alpha-helical bundle that drives membrane fusion. STX17 is a SNARE of the autophagosome involved in autophagy through the direct control of autophagosome membrane fusion with the lysosome membrane. May also play a role in the early secretory pathway where it may maintain the architecture of the endoplasmic reticulum-Golgi intermediate compartment/ERGIC and Golgi and/or regulate transport between the endoplasmic reticulum, the ERGIC and the Golgi. The polypeptide is Syntaxin-17 (Rattus norvegicus (Rat)).